The sequence spans 146 residues: Hemoglobin subunit beta (146 aa).

Residue Val-1 is modified to N-acetylvaline. Residues 2–146 enclose the Globin domain; that stretch reads HLTGEEKAAV…VANALAHKYH (145 aa). Thr-12 carries the phosphothreonine modification. Ser-44 bears the Phosphoserine mark. At Lys-59 the chain carries N6-acetyllysine. A heme b-binding site is contributed by His-63. Lys-82 carries the N6-acetyllysine modification. His-92 contacts heme b. The residue at position 93 (Cys-93) is an S-nitrosocysteine. Lys-144 is subject to N6-acetyllysine.

This sequence belongs to the globin family. As to quaternary structure, heterotetramer of two alpha chains and two beta chains. Red blood cells.

In terms of biological role, involved in oxygen transport from the lung to the various peripheral tissues. The chain is Hemoglobin subunit beta (HBB) from Martes foina (Beech marten).